The following is a 398-amino-acid chain: tRNA N6-adenosine threonylcarbamoyltransferase (398 aa).

A divalent metal cation-binding residues include H162, H166, and Y183. Residues 183 to 187, D215, G230, E234, and N329 each bind substrate; that span reads YVSGG. D357 serves as a coordination point for a divalent metal cation.

Belongs to the KAE1 / TsaD family. Component of the EKC/KEOPS complex composed of at least BUD32, CGI121, GON7, KAE1 and PCC1; the whole complex dimerizes. The cofactor is a divalent metal cation.

It is found in the cytoplasm. The protein resides in the nucleus. It carries out the reaction L-threonylcarbamoyladenylate + adenosine(37) in tRNA = N(6)-L-threonylcarbamoyladenosine(37) in tRNA + AMP + H(+). Functionally, component of the EKC/KEOPS complex that is required for the formation of a threonylcarbamoyl group on adenosine at position 37 (t(6)A37) in tRNAs that read codons beginning with adenine. The complex is probably involved in the transfer of the threonylcarbamoyl moiety of threonylcarbamoyl-AMP (TC-AMP) to the N6 group of A37. KAE1 likely plays a direct catalytic role in this reaction, but requires other protein(s) of the complex to fulfill this activity. The EKC/KEOPS complex also promotes both telomere uncapping and telomere elongation. The complex is required for efficient recruitment of transcriptional coactivators. This chain is tRNA N6-adenosine threonylcarbamoyltransferase, found in Cryptococcus neoformans var. neoformans serotype D (strain B-3501A) (Filobasidiella neoformans).